Consider the following 129-residue polypeptide: Large ribosomal subunit protein bL17 (129 aa).

The protein belongs to the bacterial ribosomal protein bL17 family. Part of the 50S ribosomal subunit. Contacts protein L32.

The sequence is that of Large ribosomal subunit protein bL17 from Serratia proteamaculans (strain 568).